A 558-amino-acid polypeptide reads, in one-letter code: Zeta-carotene desaturase, chloroplastic/chromoplastic (558 aa).

A chloroplast and chromoplast-targeting transit peptide spans Met-1–Ser-27.

Belongs to the zeta carotene desaturase family. Requires decylplastoquinone as cofactor. It depends on 6-decylubiquinone as a cofactor. As to expression, highly expressed in leaves. Expressed at low levels in flowers and siliques.

It localises to the plastid. It is found in the chloroplast. The protein localises to the chromoplast. It catalyses the reaction 9,9'-di-cis-zeta-carotene + 2 a quinone = 7,7',9,9'-tetra-cis-lycopene + 2 a quinol. It functions in the pathway carotenoid biosynthesis; lycopene biosynthesis. Plays a crucial role in plant growth and development. Is essential for the biosynthesis of carotenoids. Carotenoids are involved in different physiological processes, including coloration, photoprotection, biosynthesis of abscisic acid (ABA) and chloroplast biogenesis. Catalyzes the conversion of zeta-carotene to lycopene via the intermediary of neurosporene. It carries out two consecutive desaturations (introduction of double bonds) at positions C-7 and C-7'. Shows stereoselectivity toward trans C15-C15'zeta-carotene double bond. The zeta-carotene produced by the phytoene desaturase PDS has a C15-C15' double bond in the cis configuration and it requires isomerization before being recognized as substrate by ZDS. The main product is 7,9,7',9'-tetra-cis-lycopene (pro-lycopene). The chain is Zeta-carotene desaturase, chloroplastic/chromoplastic from Arabidopsis thaliana (Mouse-ear cress).